Reading from the N-terminus, the 280-residue chain is MTDKIIELKNVTFRYDENQEKPTLNNISFHVKHGEWLSIIGHNGSGKSTTVRLIDGLLEAESGQILIEGHKLSEDNVWDIRHKISMVFQNPDNQFVGATVEDDIAFGLENKGIPLKEMRERVVEALNLVDMSDFKTREPARLSGGQKQRVAIAGAVAMRPSIIILDEATSMLDPEGRLELIGTIQKIREQYGMTVISITHDLDEVTLSDRVLVMKNGQIESSSSPRELFSRGDELLDLGLDIPFTSTIIKALRQIGFTFDNRYLLEKELEDKLWALISKK.

Residues 6-241 (IELKNVTFRY…GDELLDLGLD (236 aa)) form the ABC transporter domain. Residue 41-48 (GHNGSGKS) coordinates ATP.

The protein belongs to the ABC transporter superfamily. Energy-coupling factor EcfA family. In terms of assembly, forms a stable energy-coupling factor (ECF) transporter complex composed of 2 membrane-embedded substrate-binding proteins (S component), 2 ATP-binding proteins (A component) and 2 transmembrane proteins (T component).

The protein resides in the cell membrane. Functionally, ATP-binding (A) component of a common energy-coupling factor (ECF) ABC-transporter complex. Unlike classic ABC transporters this ECF transporter provides the energy necessary to transport a number of different substrates. This Streptococcus mutans serotype c (strain ATCC 700610 / UA159) protein is Energy-coupling factor transporter ATP-binding protein EcfA1.